Here is a 310-residue protein sequence, read N- to C-terminus: HPr kinase/phosphorylase (310 aa).

Catalysis depends on residues His138 and Lys159. Residue 153 to 160 (GKSGVGKS) coordinates ATP. Ser160 serves as a coordination point for Mg(2+). The Proton acceptor; for phosphorylation activity. Proton donor; for dephosphorylation activity role is filled by Asp177. Positions 201–210 (LEIRGLGIIN) are important for the catalytic mechanism of both phosphorylation and dephosphorylation. Residue Glu202 coordinates Mg(2+). The active site involves Arg243. The interval 264-269 (PVRPGR) is important for the catalytic mechanism of dephosphorylation.

The protein belongs to the HPrK/P family. In terms of assembly, homohexamer. Mg(2+) is required as a cofactor.

It catalyses the reaction [HPr protein]-L-serine + ATP = [HPr protein]-O-phospho-L-serine + ADP + H(+). It carries out the reaction [HPr protein]-O-phospho-L-serine + phosphate + H(+) = [HPr protein]-L-serine + diphosphate. Catalyzes the ATP- as well as the pyrophosphate-dependent phosphorylation of a specific serine residue in HPr, a phosphocarrier protein of the phosphoenolpyruvate-dependent sugar phosphotransferase system (PTS). HprK/P also catalyzes the pyrophosphate-producing, inorganic phosphate-dependent dephosphorylation (phosphorolysis) of seryl-phosphorylated HPr (P-Ser-HPr). The two antagonistic activities of HprK/P are regulated by several intracellular metabolites, which change their concentration in response to the absence or presence of rapidly metabolisable carbon sources (glucose, fructose, etc.) in the growth medium. Also phosphorylates/dephosphorylates the HPr-like catabolite repression protein crh on a specific serine residue. Therefore, by controlling the phosphorylation state of HPr and crh, HPrK/P is a sensor enzyme that plays a major role in the regulation of carbon metabolism and sugar transport: it mediates carbon catabolite repression (CCR), and regulates PTS-catalyzed carbohydrate uptake and inducer exclusion. This Bacillus licheniformis (strain ATCC 14580 / DSM 13 / JCM 2505 / CCUG 7422 / NBRC 12200 / NCIMB 9375 / NCTC 10341 / NRRL NRS-1264 / Gibson 46) protein is HPr kinase/phosphorylase.